The sequence spans 245 residues: Demethylmenaquinone methyltransferase (245 aa).

S-adenosyl-L-methionine-binding positions include T70, D90, and 118 to 119; that span reads DC.

Belongs to the class I-like SAM-binding methyltransferase superfamily. MenG/UbiE family.

It carries out the reaction a 2-demethylmenaquinol + S-adenosyl-L-methionine = a menaquinol + S-adenosyl-L-homocysteine + H(+). It functions in the pathway quinol/quinone metabolism; menaquinone biosynthesis; menaquinol from 1,4-dihydroxy-2-naphthoate: step 2/2. Functionally, methyltransferase required for the conversion of demethylmenaquinol (DMKH2) to menaquinol (MKH2). This Bacteroides fragilis (strain ATCC 25285 / DSM 2151 / CCUG 4856 / JCM 11019 / LMG 10263 / NCTC 9343 / Onslow / VPI 2553 / EN-2) protein is Demethylmenaquinone methyltransferase.